The sequence spans 143 residues: Transcriptional regulator MraZ (143 aa).

2 consecutive SpoVT-AbrB domains span residues 5–47 (EYDH…TLDE) and 76–119 (AVEV…DRET).

The protein belongs to the MraZ family. In terms of assembly, forms oligomers.

It is found in the cytoplasm. The protein localises to the nucleoid. This Staphylococcus aureus (strain Mu3 / ATCC 700698) protein is Transcriptional regulator MraZ.